Reading from the N-terminus, the 95-residue chain is MALTKADLAENLFEKLGFSKRDAKDTVEVFFEEIRKALENGEQVKLSGFGNFDLRDKNERPGRNPKTGEDIPITARRVVTFRPGQKLKARVENLK.

The disordered stretch occupies residues 51–71; it reads NFDLRDKNERPGRNPKTGEDI. The span at 53–69 shows a compositional bias: basic and acidic residues; the sequence is DLRDKNERPGRNPKTGE.

It belongs to the bacterial histone-like protein family. As to quaternary structure, heterodimer of an alpha and a beta chain.

Functionally, this protein is one of the two subunits of integration host factor, a specific DNA-binding protein that functions in genetic recombination as well as in transcriptional and translational control. The polypeptide is Integration host factor subunit alpha (Vibrio vulnificus (strain CMCP6)).